We begin with the raw amino-acid sequence, 249 residues long: Probable calcium-binding protein CML12 (249 aa).

Positions methionine 1 to histidine 24 are enriched in basic and acidic residues. The segment at methionine 1–glutamate 80 is disordered. A compositionally biased stretch (low complexity) spans alanine 30–valine 56. Basic and acidic residues predominate over residues aspartate 57 to lysine 70. EF-hand domains follow at residues glutamate 91–arginine 126, alanine 128–glycine 163, valine 171–proline 206, and isoleucine 207–aspartate 242. Residues aspartate 104, aspartate 106, aspartate 108, serine 110, glutamate 115, aspartate 141, aspartate 143, asparagine 145, threonine 147, glutamate 152, aspartate 184, aspartate 186, asparagine 188, glutamate 195, aspartate 220, aspartate 222, aspartate 224, and glutamate 231 each coordinate Ca(2+).

Its function is as follows. Potential calcium sensor. This Oryza sativa subsp. japonica (Rice) protein is Probable calcium-binding protein CML12 (CML12).